Here is a 500-residue protein sequence, read N- to C-terminus: MSYFPWLTILVVLPIFAGSLIFFLPHKGNKIVRWYTISICLLEFLLMTYAFCYHFQLEDPLIQLKEDYKWIDVFDFHWRLGIDGLSLGSILLTGFITTLATLAAWPITRNSRLFYFLMLAMYSGQIGLFSSRDLLLFFIMWELELIPVYLLLSMWGGKRRLYSATKFILYTAGGSIFFLIGVLGMGLYGSNEPGLDLERLINQSYPATLEILLYFGFLIAYAVKLPIIPLHTWLPDTHGEAHYSTCMLLAGILLKMGAYGLIRINMELLPHAHYLFSPWLVIIGAIQIIYAALTSLGQRNFKKRIAYSSVSHMGFIIIGIGSITNIGLNGAILQILSHGFIGATLFFLAGTASDRMRLVYLEELGGISIPMPKIFTMFSSFSMASLALPGMSGFVAELVVFFGLITSPKFLLMPKALITFVMAIGMILTPIYLLSMLRQMFYGYKLFNVPNANFVDSGPRELFILICIFLPVIGIGIYPDFVLSLSVDRVEALLSNYYPK.

14 helical membrane-spanning segments follow: residues 4 to 24 (FPWL…IFFL), 37 to 57 (ISIC…HFQL), 87 to 107 (LGSI…AWPI), 113 to 130 (LFYF…GLFS), 134 to 154 (LLLF…LLSM), 167 to 187 (FILY…GMGL), 211 to 231 (ILLY…IPLH), 242 to 262 (HYST…YGLI), 274 to 294 (YLFS…AALT), 313 to 333 (MGFI…GAIL), 334 to 354 (QILS…TASD), 386 to 406 (LALP…GLIT), 417 to 437 (LITF…LSML), and 462 to 482 (LFIL…PDFV).

It belongs to the complex I subunit 4 family.

The protein resides in the plastid. Its subcellular location is the chloroplast thylakoid membrane. The catalysed reaction is a plastoquinone + NADH + (n+1) H(+)(in) = a plastoquinol + NAD(+) + n H(+)(out). The enzyme catalyses a plastoquinone + NADPH + (n+1) H(+)(in) = a plastoquinol + NADP(+) + n H(+)(out). This is NAD(P)H-quinone oxidoreductase chain 4, chloroplastic (ndhD) from Hordeum vulgare (Barley).